The chain runs to 104 residues: UPF0473 protein SH1304 (104 aa).

Belongs to the UPF0473 family.

This is UPF0473 protein SH1304 from Staphylococcus haemolyticus (strain JCSC1435).